Consider the following 645-residue polypeptide: Chaperone protein DnaK (645 aa).

Threonine 201 carries the post-translational modification Phosphothreonine; by autocatalysis. A compositionally biased stretch (low complexity) spans 606 to 629; it reads NTNNATAGDNNTTDTGSSSNSDGS. Positions 606-645 are disordered; the sequence is NTNNATAGDNNTTDTGSSSNSDGSKVVDSDYQEIDKKDGK. Basic and acidic residues predominate over residues 630–645; it reads KVVDSDYQEIDKKDGK.

It belongs to the heat shock protein 70 family.

Acts as a chaperone. This is Chaperone protein DnaK from Ehrlichia ruminantium (strain Gardel).